A 444-amino-acid chain; its full sequence is C4-dicarboxylate transport protein (444 aa).

9 helical membrane passes run 21 to 41 (HLYVQVLVAIAAGILLGHFYP), 57 to 77 (LVKMIIAPVIFLTVATGIAGM), 92 to 112 (IYFLTFSTLALIIGLIVANVV), 161 to 181 (GDILQVLFFSVLFGIALALVG), 201 to 221 (LVSILMKAAPIGAFGAMAFTI), 234 to 254 (LLIGTFYLTALLFVLVVLGAV), 320 to 340 (IYMTLAALFIAQATDIPLSLS), 345 to 365 (LLLVAMLSSKGAAGITGAGFI), and 368 to 388 (AATLSVVPAVPVAGMALILGI).

This sequence belongs to the dicarboxylate/amino acid:cation symporter (DAACS) (TC 2.A.23) family.

It is found in the cell inner membrane. Functionally, responsible for the transport of dicarboxylates such as succinate, fumarate, and malate from the periplasm across the membrane. In Brucella anthropi (strain ATCC 49188 / DSM 6882 / CCUG 24695 / JCM 21032 / LMG 3331 / NBRC 15819 / NCTC 12168 / Alc 37) (Ochrobactrum anthropi), this protein is C4-dicarboxylate transport protein.